The following is a 176-amino-acid chain: Nucleoside triphosphate/diphosphate phosphatase (176 aa).

R23 acts as the Proton donor in catalysis. Residues N87, D103, D105, D107, D120, and E123 each coordinate Mg(2+).

The protein belongs to the Ntdp family. Requires Mg(2+) as cofactor.

It catalyses the reaction a ribonucleoside 5'-triphosphate + H2O = a ribonucleoside 5'-diphosphate + phosphate + H(+). The catalysed reaction is a ribonucleoside 5'-diphosphate + H2O = a ribonucleoside 5'-phosphate + phosphate + H(+). Has nucleoside phosphatase activity towards nucleoside triphosphates and nucleoside diphosphates. In Bacillus pumilus (strain SAFR-032), this protein is Nucleoside triphosphate/diphosphate phosphatase.